The chain runs to 306 residues: Agmatinase (306 aa).

His-126, Asp-149, His-151, Asp-153, Asp-230, and Asp-232 together coordinate Mn(2+).

The protein belongs to the arginase family. Agmatinase subfamily. Mn(2+) serves as cofactor.

It carries out the reaction agmatine + H2O = urea + putrescine. It functions in the pathway amine and polyamine biosynthesis; putrescine biosynthesis via agmatine pathway; putrescine from agmatine: step 1/1. In terms of biological role, catalyzes the formation of putrescine from agmatine. The protein is Agmatinase of Salmonella dublin (strain CT_02021853).